Here is a 222-residue protein sequence, read N- to C-terminus: Cytidylate kinase (222 aa).

7-15 contributes to the ATP binding site; it reads GPSASGKST.

It belongs to the cytidylate kinase family. Type 1 subfamily.

The protein localises to the cytoplasm. It carries out the reaction CMP + ATP = CDP + ADP. It catalyses the reaction dCMP + ATP = dCDP + ADP. This Aquifex aeolicus (strain VF5) protein is Cytidylate kinase.